The sequence spans 449 residues: Guanine/hypoxanthine permease GhxP (449 aa).

Residues 1-25 are Cytoplasmic-facing; that stretch reads MSTPSARTGGSLDAWFKISQRGSTV. The chain crosses the membrane as a helical span at residues 26 to 49; that stretch reads RQEVVAGLTTFLAMVYSVIVVPGM. Residues 50-59 lie on the Periplasmic side of the membrane; the sequence is LGKAGFPPAA. Residues 60-78 traverse the membrane as a helical segment; sequence VFVATCLVAGLGSIVMGLW. Over 79-80 the chain is Cytoplasmic; the sequence is AN. The chain crosses the membrane as a discontinuously helical span at residues 81 to 97; the sequence is LPLAIGCAISLTAFTAF. The Periplasmic segment spans residues 98–109; that stretch reads SLVLGQHISVPV. Residues 110 to 129 form a helical membrane-spanning segment; it reads ALGAVFLMGVLFTVISATGI. Over 130–141 the chain is Cytoplasmic; that stretch reads RSWILRNLPHGV. Residues 142–162 traverse the membrane as a helical segment; it reads AHGTGIGIGLFLLLIAANGVG. The Periplasmic portion of the chain corresponds to 163-180; it reads LVIKNPLDGLPVALGDFA. A helical transmembrane segment spans residues 181 to 198; the sequence is TFPVIMSLVGLAVIIGLE. Residues 199–202 are Cytoplasmic-facing; sequence KLKV. A helical membrane pass occupies residues 203 to 222; sequence PGGILLTIIGISIVGLIFDP. Over 223–254 the chain is Periplasmic; that stretch reads NVHFSGVFAMPSLSDENGNSLIGSLDIMGALN. A helical membrane pass occupies residues 255 to 283; the sequence is PVVLPSVLALVMTAVFDATGTIRAVAGQA. Residues 284-296 are Cytoplasmic-facing; sequence NLLDKDGQIIDGG. Residues 297 to 312 form a helical membrane-spanning segment; the sequence is KALTTDSMSSVFSGLV. The Periplasmic portion of the chain corresponds to 313 to 314; it reads GA. A discontinuously helical transmembrane segment spans residues 315-330; that stretch reads APAAVYIESAAGTAAG. At 331-334 the chain is on the cytoplasmic side; the sequence is GKTG. Residues 335–349 form a helical membrane-spanning segment; the sequence is LTAITVGVLFLLILF. At 350–360 the chain is on the periplasmic side; the sequence is LSPLSYLVPGY. A helical membrane pass occupies residues 361-380; sequence ATAPALMYVGLLMLSNVAKI. At 381–385 the chain is on the cytoplasmic side; sequence DFADF. Residues 386-421 constitute an intramembrane region (discontinuously helical); that stretch reads VDAMAGLVTAVFIVLTCNIVTGIMIGFATLVIGRLV. Residues 422 to 449 lie on the Cytoplasmic side of the membrane; the sequence is SGEWRKLNIGTVVIAVALVTFYAGGWAI.

The protein belongs to the nucleobase:cation symporter-2 (NCS2) (TC 2.A.40) family. Azg-like subfamily.

It localises to the cell inner membrane. Functionally, high-affinity transporter for guanine and hypoxanthine. The polypeptide is Guanine/hypoxanthine permease GhxP (ghxP) (Escherichia coli O157:H7).